Consider the following 142-residue polypeptide: Large ribosomal subunit protein uL13 (142 aa).

It belongs to the universal ribosomal protein uL13 family. As to quaternary structure, part of the 50S ribosomal subunit.

Its function is as follows. This protein is one of the early assembly proteins of the 50S ribosomal subunit, although it is not seen to bind rRNA by itself. It is important during the early stages of 50S assembly. This is Large ribosomal subunit protein uL13 from Agathobacter rectalis (strain ATCC 33656 / DSM 3377 / JCM 17463 / KCTC 5835 / VPI 0990) (Eubacterium rectale).